A 79-amino-acid polypeptide reads, in one-letter code: MSAVAGCTATTDPGWEVDAFGGVSSLCQPMEADLYGCSDPCWWPAQVPDMMSTYQDWNAQASNSAEDWRNLGTVFPKDK.

The segment at residues 7 to 16 is a cross-link (4-cysteinyl-glutamic acid (Cys-Glu)); it reads CTATTDPGWE. 2 consecutive cross-links (3-cysteinyl-aspartic acid (Cys-Asp)) follow at residues 27–33 and 41–49; these read CQPMEAD and CWWPAQVPD. Aspartate 33 serves as the catalytic Proton acceptor. The segment at residues 37–43 is a cross-link (4'-cysteinyl-tryptophylquinone (Cys-Trp)); the sequence is CSDPCWW. Tryptophan 43 carries the post-translational modification Tryptophylquinone.

This sequence belongs to the quinohemoprotein amine dehydrogenase subunit gamma family. Heterotrimer of an alpha, a beta and a gamma subunit. Cysteine tryptophylquinone residue is required as a cofactor. The cysteine tryptophylquinone (CTQ) is generated by oxidation of the indole ring of a tryptophan residue to form tryptophylquinone, followed by covalent cross-linking with a cysteine residue.

It localises to the periplasm. The catalysed reaction is an aliphatic amine + A + H2O = an aldehyde + AH2 + NH4(+). In terms of biological role, catalyzes the oxidative deamination of a wide range of aliphatic monoamines and diamines. The physiological electron acceptor is an azurin-like blue protein. The polypeptide is Quinohemoprotein amine dehydrogenase subunit gamma (qhnDH) (Pseudomonas putida (strain ATCC 47054 / DSM 6125 / CFBP 8728 / NCIMB 11950 / KT2440)).